The sequence spans 1336 residues: Mating factor M secretion protein mam1 (1336 aa).

Positions 1 to 29 (MHIHSDLSLPQFEHASIDPPSYSPQKSSF) are disordered. Over 1–91 (MHIHSDLSLP…ELAGVSSWSD (91 aa)) the chain is Cytoplasmic. Residues 92-112 (FFYLFHFSDIPLIFGTLIFTC) traverse the membrane as a helical segment. One can recognise an ABC transmembrane type-1 1 domain in the interval 104-396 (IFGTLIFTCL…ILPAIPDLIK (293 aa)). Topologically, residues 113 to 153 (LSAALEPLMTWTTGKVFDALSQYATSQITLGKMISLINFNS) are extracellular. A helical membrane pass occupies residues 154–174 (LLITIFGLASCVFSFGVRFLW). At 175 to 250 (QYLSAIAGKR…SCLIISFRYS (76 aa)) the chain is on the cytoplasmic side. The helical transmembrane segment at 251–271 (WSLTLVVLASYPIIILVVGFI) threads the bilayer. Over 272–778 (NSFLSSAYEK…KSIWKVKKLR (507 aa)) the chain is Extracellular. The ABC transporter 1 domain maps to 433–668 (FRFDNVSFAY…EDFENNVSID (236 aa)). Residues Asn-437 and Asn-454 are each glycosylated (N-linked (GlcNAc...) asparagine). An ATP-binding site is contributed by 469 to 476 (GPSGSGKS). N-linked (GlcNAc...) asparagine glycosylation is found at Asn-536, Asn-664, and Asn-697. The chain crosses the membrane as a helical span at residues 779 to 799 (WFFLLGLLTSLIQGASVPIFA). Residues 781–1066 (FLLGLLTSLI…CIMSLPNVSA (286 aa)) form the ABC transmembrane type-1 2 domain. Residues 800–897 (YVISKCLNLF…ISDMRNMISS (98 aa)) lie on the Cytoplasmic side of the membrane. A helical transmembrane segment spans residues 898 to 918 (LIEEVFIAFTMAIIGIAWSFA). Over 919–1336 (TGWRLAAVLV…KLIHRGEWIE (418 aa)) the chain is Extracellular. Asn-1011, Asn-1063, and Asn-1120 each carry an N-linked (GlcNAc...) asparagine glycan. Residues 1099–1331 (IEFDGVSFAY…HTHFWKLIHR (233 aa)) enclose the ABC transporter 2 domain. 1135-1142 (GISGSGKS) is an ATP binding site. Asn-1235 and Asn-1280 each carry an N-linked (GlcNAc...) asparagine glycan.

The protein belongs to the ABC transporter superfamily. Alpha-factor sex pheromone exporter (TC 3.A.1.206) family.

It localises to the membrane. Functionally, required in S.pombe M (minus) cells for production of M-factor pheromone. Involved in the transport of the farnesyl-derivation of the M-factor pheromone. In Schizosaccharomyces pombe (strain 972 / ATCC 24843) (Fission yeast), this protein is Mating factor M secretion protein mam1 (mam1).